Here is a 217-residue protein sequence, read N- to C-terminus: Phosphoribosylformylglycinamidine synthase subunit PurQ (217 aa).

The Glutamine amidotransferase type-1 domain occupies 2-217; it reads NIGIIVFPGS…GKSILSTLLS (216 aa). Catalysis depends on C86, which acts as the Nucleophile. Catalysis depends on residues H194 and E196.

In terms of assembly, part of the FGAM synthase complex composed of 1 PurL, 1 PurQ and 2 PurS subunits.

It is found in the cytoplasm. The enzyme catalyses N(2)-formyl-N(1)-(5-phospho-beta-D-ribosyl)glycinamide + L-glutamine + ATP + H2O = 2-formamido-N(1)-(5-O-phospho-beta-D-ribosyl)acetamidine + L-glutamate + ADP + phosphate + H(+). It catalyses the reaction L-glutamine + H2O = L-glutamate + NH4(+). It functions in the pathway purine metabolism; IMP biosynthesis via de novo pathway; 5-amino-1-(5-phospho-D-ribosyl)imidazole from N(2)-formyl-N(1)-(5-phospho-D-ribosyl)glycinamide: step 1/2. In terms of biological role, part of the phosphoribosylformylglycinamidine synthase complex involved in the purines biosynthetic pathway. Catalyzes the ATP-dependent conversion of formylglycinamide ribonucleotide (FGAR) and glutamine to yield formylglycinamidine ribonucleotide (FGAM) and glutamate. The FGAM synthase complex is composed of three subunits. PurQ produces an ammonia molecule by converting glutamine to glutamate. PurL transfers the ammonia molecule to FGAR to form FGAM in an ATP-dependent manner. PurS interacts with PurQ and PurL and is thought to assist in the transfer of the ammonia molecule from PurQ to PurL. This is Phosphoribosylformylglycinamidine synthase subunit PurQ from Prochlorococcus marinus (strain NATL2A).